The chain runs to 60 residues: MGVPKRRTSKARKNKRRSIWGQMAAPTLVECPQCHQLKLNHRVCPKCGYYKGREAIQVAE.

This sequence belongs to the bacterial ribosomal protein bL32 family.

This chain is Large ribosomal subunit protein bL32, found in Moorella thermoacetica (strain ATCC 39073 / JCM 9320).